The sequence spans 166 residues: Small ribosomal subunit protein uS5 (166 aa).

In terms of domain architecture, S5 DRBM spans Leu11 to Val74.

The protein belongs to the universal ribosomal protein uS5 family. As to quaternary structure, part of the 30S ribosomal subunit. Contacts proteins S4 and S8.

Functionally, with S4 and S12 plays an important role in translational accuracy. In terms of biological role, located at the back of the 30S subunit body where it stabilizes the conformation of the head with respect to the body. The sequence is that of Small ribosomal subunit protein uS5 from Tolumonas auensis (strain DSM 9187 / NBRC 110442 / TA 4).